Consider the following 397-residue polypeptide: MAKAKFERSKPHVNIGTIGHVDHGKTTLTAAITTVLAQKGGASATKYDEIDKAPEEKERGITINTSHVEYETANRHYAHVDCPGHADYVKNMITGAAQMDGAILVVSAADGPMPQTREHILLASRVGVQYIVVFLNKADQVDDPELIELVEMEVRELLNEYGFPGDDTPIVVGSALEVLENQDNAEKTKCIDELMEAIDSYIPTPERATDQPFLMPVEDVFTITGRGTVATGRVERGVLHTGDEVELIGMKEEITKTVCTGIEMFRKILDEAMAGDNIGALLRGIQRDEIQRGQVLAKPGSITPHKKFVGQVYVLKKEEGGRHTPFFNGYRPQFYFRTTDVTGSINLPEGVEMVMPGDHIDMAVELITPVAMHENLRFAIREGGRTVGSGVVTTISE.

The region spanning Lys-10 to Glu-206 is the tr-type G domain. The tract at residues Gly-19–Thr-26 is G1. Gly-19–Thr-26 contacts GTP. Residue Thr-26 coordinates Mg(2+). The tract at residues Gly-60–Asn-64 is G2. Positions Asp-81–Gly-84 are G3. GTP-binding positions include Asp-81–His-85 and Asn-136–Asp-139. The segment at Asn-136 to Asp-139 is G4. The interval Ser-174–Leu-176 is G5.

Belongs to the TRAFAC class translation factor GTPase superfamily. Classic translation factor GTPase family. EF-Tu/EF-1A subfamily. Monomer.

Its subcellular location is the cytoplasm. It catalyses the reaction GTP + H2O = GDP + phosphate + H(+). GTP hydrolase that promotes the GTP-dependent binding of aminoacyl-tRNA to the A-site of ribosomes during protein biosynthesis. The sequence is that of Elongation factor Tu from Clostridium botulinum (strain Loch Maree / Type A3).